Consider the following 181-residue polypeptide: uncharacterized protein (181 aa).

Positions 1 to 19 (MRRLLACSAGVLCFSQLGA) are cleaved as a signal peptide.

This is an uncharacterized protein from Treponema pallidum (strain Nichols).